The sequence spans 599 residues: MSDLSHIRNFSIIAHIDHGKSTLADRFIQMCGGLSAREMEAQVLDSMDLERERGITIKAHSVTLHYKAQDGKTYQLNFIDTPGHVDFTYEVSRSLAACEGALLVVDAGQGVEAQSVANCYTAIEQGLEVMPVLNKMDLPQADPDRVKDEIEKIIGIDATDAVACSAKSGMGVDEVLERLVHTIPAPEGEIDAPLQALIIDSWFDNYLGVVSLVRVRQGRVKKGDKILVKSTGKVHLVDSVGVFTPKHTQTADLKAGEVGFIIASIKDIHGAPVGDTLTLSSTPEVEVLPGFKKIQPQVYAGLFPVSSDDFEDFRDALQKLTLNDSSLQYMPESSDALGFGFRCGFLGMLHMEIIQERLEREYDLDLITTAPSVIYELELKTGETIVVDNPSKLPDVSAVADFREPIVTATILVPQEHLGNVITLCIEKRGVQRDMQFLGSQVQVRYDMPMNEVVLDFFDRLKSTSRGYASLDYHFDRYQSANLVKLDVLINGDKVDALALIVHRDNAAYKGRALTEKMKELIPRQMFDVAIQAAIGGQIIARTTVKALRKNVLAKCYGGDVSRKKKLLEKQKAGKKRMKQVGNVEIPQEAFLAVLRLDS.

Positions 5–187 (SHIRNFSIIA…RLVHTIPAPE (183 aa)) constitute a tr-type G domain. Residues 17-22 (DHGKST) and 134-137 (NKMD) contribute to the GTP site.

Belongs to the TRAFAC class translation factor GTPase superfamily. Classic translation factor GTPase family. LepA subfamily.

It is found in the cell inner membrane. It catalyses the reaction GTP + H2O = GDP + phosphate + H(+). In terms of biological role, required for accurate and efficient protein synthesis under certain stress conditions. May act as a fidelity factor of the translation reaction, by catalyzing a one-codon backward translocation of tRNAs on improperly translocated ribosomes. Back-translocation proceeds from a post-translocation (POST) complex to a pre-translocation (PRE) complex, thus giving elongation factor G a second chance to translocate the tRNAs correctly. Binds to ribosomes in a GTP-dependent manner. This Pseudomonas putida (strain ATCC 47054 / DSM 6125 / CFBP 8728 / NCIMB 11950 / KT2440) protein is Elongation factor 4.